The chain runs to 1047 residues: Ubiquitin carboxyl-terminal hydrolase 48 (1047 aa).

Positions 89-416 (VGLTNLGATC…NAYMLVYKQQ (328 aa)) constitute a USP domain. The Nucleophile role is filled by C98. The active-site Proton acceptor is H348. DUSP domains follow at residues 457-551 (QSVD…RSSL), 567-697 (NQLN…DHDP), and 717-830 (MMAN…RIHD). The tract at residues 609–647 (LEEDEEETKHNNSKINGEKSSPGTKADGVKGDSEDGDGE) is disordered. Over residues 621–631 (SKINGEKSSPG) the composition is skewed to polar residues. Positions 635 to 647 (DGVKGDSEDGDGE) are enriched in basic and acidic residues. Residues 887-928 (PEFSVSGSDVEDEKEEPKLDGEKDPDFSQTEGGAKRQKLNDT) form a disordered region. A compositionally biased stretch (basic and acidic residues) spans 901–912 (EEPKLDGEKDPD). In terms of domain architecture, Ubiquitin-like spans 961 to 1012 (VSANQTLKDLKIQIMHAFSVAPFDQNLSIDGRCLKDDSATLGSLGVIPESII).

The protein belongs to the peptidase C19 family.

The protein resides in the cytoplasm. It localises to the nucleus. It catalyses the reaction Thiol-dependent hydrolysis of ester, thioester, amide, peptide and isopeptide bonds formed by the C-terminal Gly of ubiquitin (a 76-residue protein attached to proteins as an intracellular targeting signal).. Recognizes and hydrolyzes the peptide bond at the C-terminal Gly of ubiquitin. Involved in the processing of poly-ubiquitin precursors as well as that of ubiquitinated proteins. This chain is Ubiquitin carboxyl-terminal hydrolase 48 (usp48), found in Danio rerio (Zebrafish).